The following is a 263-amino-acid chain: Nitrogenase iron protein 2 (263 aa).

9-16 (GKGGIGKS) lines the ATP pocket. Cysteine 92 provides a ligand contact to [4Fe-4S] cluster. Arginine 95 bears the ADP-ribosylarginine; by dinitrogenase reductase ADP-ribosyltransferase mark. A [4Fe-4S] cluster-binding site is contributed by cysteine 127.

It belongs to the NifH/BchL/ChlL family. In terms of assembly, homodimer. [4Fe-4S] cluster is required as a cofactor. The reversible ADP-ribosylation of Arg-95 inactivates the nitrogenase reductase and regulates nitrogenase activity.

It catalyses the reaction N2 + 8 reduced [2Fe-2S]-[ferredoxin] + 16 ATP + 16 H2O = H2 + 8 oxidized [2Fe-2S]-[ferredoxin] + 2 NH4(+) + 16 ADP + 16 phosphate + 6 H(+). Functionally, the key enzymatic reactions in nitrogen fixation are catalyzed by the nitrogenase complex, which has 2 components: the iron protein and the molybdenum-iron protein. In Methanobacterium ivanovii, this protein is Nitrogenase iron protein 2 (nifH2).